The sequence spans 239 residues: Chlorate reductase subunit gamma (239 aa).

The signal sequence occupies residues 1–27 (MKTNILVKRMAVIGLAVAAACTGAAAA). Heme b is bound by residues histidine 74 and methionine 138.

As to quaternary structure, heterotrimer of alpha, beta and gamma subunits. The cofactor is heme b.

It localises to the periplasm. Its function is as follows. May transfer electrons to the iron-sulfur centers of ClrB. The sequence is that of Chlorate reductase subunit gamma (clrC) from Ideonella dechloratans.